The sequence spans 249 residues: ATP synthase subunit a (249 aa).

6 helical membrane-spanning segments follow: residues 30–50, 84–104, 113–133, 143–163, 196–216, and 221–241; these read SAYMLLAVAIISLLMIGGSAG, FFPLVFSLFMFIMVSNMVGII, HIIVTAALAFLVFFTVLIYGF, IFVPSGVPGFILPLVVFIEVF, LLAGLGIAGYFGAVLPLGMVV, and LELLVAFLQAYVFAILTCIYL.

This sequence belongs to the ATPase A chain family. As to quaternary structure, F-type ATPases have 2 components, CF(1) - the catalytic core - and CF(0) - the membrane proton channel. CF(1) has five subunits: alpha(3), beta(3), gamma(1), delta(1), epsilon(1). CF(0) has four main subunits: a, b, b' and c.

Its subcellular location is the cell inner membrane. In terms of biological role, key component of the proton channel; it plays a direct role in the translocation of protons across the membrane. In Rhodopseudomonas palustris (strain BisA53), this protein is ATP synthase subunit a.